A 416-amino-acid polypeptide reads, in one-letter code: Histidine--tRNA ligase (416 aa).

The protein belongs to the class-II aminoacyl-tRNA synthetase family.

The protein localises to the cytoplasm. It carries out the reaction tRNA(His) + L-histidine + ATP = L-histidyl-tRNA(His) + AMP + diphosphate + H(+). This Methanococcus maripaludis (strain DSM 14266 / JCM 13030 / NBRC 101832 / S2 / LL) protein is Histidine--tRNA ligase.